The chain runs to 277 residues: NADPH-dependent 7-cyano-7-deazaguanine reductase (277 aa).

83–85 (VES) is a binding site for substrate. 85–86 (SK) is an NADPH binding site. The active-site Thioimide intermediate is C184. D191 acts as the Proton donor in catalysis. 223 to 224 (HE) contacts substrate. 252–253 (RG) contacts NADPH.

It belongs to the GTP cyclohydrolase I family. QueF type 2 subfamily. As to quaternary structure, homodimer.

It is found in the cytoplasm. It catalyses the reaction 7-aminomethyl-7-carbaguanine + 2 NADP(+) = 7-cyano-7-deazaguanine + 2 NADPH + 3 H(+). It participates in tRNA modification; tRNA-queuosine biosynthesis. Its function is as follows. Catalyzes the NADPH-dependent reduction of 7-cyano-7-deazaguanine (preQ0) to 7-aminomethyl-7-deazaguanine (preQ1). The sequence is that of NADPH-dependent 7-cyano-7-deazaguanine reductase from Ralstonia nicotianae (strain ATCC BAA-1114 / GMI1000) (Ralstonia solanacearum).